The sequence spans 352 residues: Septin-2B (352 aa).

A Septin-type G domain is found at 33–305; sequence KGFEFTLMVV…ENFRSERLKK (273 aa). Residues 43-50 are G1 motif; the sequence is GESGLGKS. GTP is bound by residues 43–50, T77, G103, 182–190, G240, and R255; these read GESGLGKS and KADTLTLRE. Residues 100–103 form a G3 motif region; that stretch reads DTPG. A G4 motif region spans residues 181 to 184; the sequence is AKAD. An important for dimerization region spans residues 259-269; sequence WGVVEVENPEH.

This sequence belongs to the TRAFAC class TrmE-Era-EngA-EngB-Septin-like GTPase superfamily. Septin GTPase family. Septins polymerize into heterooligomeric protein complexes that form filaments, and associate with cellular membranes, actin filaments and microtubules. GTPase activity is required for filament formation. Can form heterooligomers with other family members and form filaments. Interacts with wdpcp.

It localises to the cytoplasm. It is found in the cytoskeleton. The protein localises to the spindle. Its subcellular location is the cleavage furrow. The protein resides in the midbody. It localises to the cell projection. It is found in the cilium membrane. In terms of biological role, filament-forming cytoskeletal GTPase. Required for normal organization of the actin cytoskeleton. Plays a role in the biogenesis of polarized columnar-shaped epithelium. Required for the progression through mitosis through regulation of chromosome congression. During anaphase, may be required for chromosome segregation and spindle elongation. Probably plays a role in ciliogenesis and collective cell movements including convergent extension during gastrulation. In cilia, required for the integrity of the diffusion barrier at the base of the primary cilium that prevents diffusion of transmembrane proteins between the cilia and plasma membranes. Controls cell shape and not polarization of cells during convergent extension. The chain is Septin-2B (sept2-b) from Xenopus laevis (African clawed frog).